The primary structure comprises 211 residues: Thiamine-phosphate synthase (211 aa).

Residues 38-42 (QLREK) and N70 contribute to the 4-amino-2-methyl-5-(diphosphooxymethyl)pyrimidine site. Positions 71 and 90 each coordinate Mg(2+). 4-amino-2-methyl-5-(diphosphooxymethyl)pyrimidine is bound at residue S109. A 2-[(2R,5Z)-2-carboxy-4-methylthiazol-5(2H)-ylidene]ethyl phosphate-binding site is contributed by 135–137 (TST). K138 contributes to the 4-amino-2-methyl-5-(diphosphooxymethyl)pyrimidine binding site. 2-[(2R,5Z)-2-carboxy-4-methylthiazol-5(2H)-ylidene]ethyl phosphate-binding positions include G165 and 185–186 (IS).

This sequence belongs to the thiamine-phosphate synthase family. The cofactor is Mg(2+).

It carries out the reaction 2-[(2R,5Z)-2-carboxy-4-methylthiazol-5(2H)-ylidene]ethyl phosphate + 4-amino-2-methyl-5-(diphosphooxymethyl)pyrimidine + 2 H(+) = thiamine phosphate + CO2 + diphosphate. It catalyses the reaction 2-(2-carboxy-4-methylthiazol-5-yl)ethyl phosphate + 4-amino-2-methyl-5-(diphosphooxymethyl)pyrimidine + 2 H(+) = thiamine phosphate + CO2 + diphosphate. The catalysed reaction is 4-methyl-5-(2-phosphooxyethyl)-thiazole + 4-amino-2-methyl-5-(diphosphooxymethyl)pyrimidine + H(+) = thiamine phosphate + diphosphate. Its pathway is cofactor biosynthesis; thiamine diphosphate biosynthesis; thiamine phosphate from 4-amino-2-methyl-5-diphosphomethylpyrimidine and 4-methyl-5-(2-phosphoethyl)-thiazole: step 1/1. Condenses 4-methyl-5-(beta-hydroxyethyl)thiazole monophosphate (THZ-P) and 2-methyl-4-amino-5-hydroxymethyl pyrimidine pyrophosphate (HMP-PP) to form thiamine monophosphate (TMP). This chain is Thiamine-phosphate synthase, found in Clostridium acetobutylicum (strain ATCC 824 / DSM 792 / JCM 1419 / IAM 19013 / LMG 5710 / NBRC 13948 / NRRL B-527 / VKM B-1787 / 2291 / W).